The following is a 380-amino-acid chain: Dynactin subunit 2 (380 aa).

Residues methionine 1–asparagine 40 are disordered. The span at glutamate 21–asparagine 40 shows a compositional bias: acidic residues. 2 coiled-coil regions span residues valine 100–aspartate 135 and glutamate 353–serine 377.

Belongs to the dynactin subunit 2 family. As to quaternary structure, subunit of dynactin, a multiprotein complex associated with dynein.

It is found in the cytoplasm. The protein resides in the cytoskeleton. The protein localises to the membrane. In terms of biological role, modulates cytoplasmic dynein binding to an organelle, and plays a role in prometaphase chromosome alignment and spindle organization during mitosis. May play a role in synapse formation during brain development. In Drosophila pseudoobscura pseudoobscura (Fruit fly), this protein is Dynactin subunit 2.